An 89-amino-acid polypeptide reads, in one-letter code: Large ribosomal subunit protein bL27 (89 aa).

The interval 1–21 is disordered; it reads MAHKKAGGSSRNGRDSESKRL.

It belongs to the bacterial ribosomal protein bL27 family.

The sequence is that of Large ribosomal subunit protein bL27 from Brucella anthropi (strain ATCC 49188 / DSM 6882 / CCUG 24695 / JCM 21032 / LMG 3331 / NBRC 15819 / NCTC 12168 / Alc 37) (Ochrobactrum anthropi).